We begin with the raw amino-acid sequence, 205 residues long: Molybdenum cofactor guanylyltransferase (205 aa).

Residues L14 to G16, K27, D77, and D107 contribute to the GTP site. Position 107 (D107) interacts with Mg(2+).

The protein belongs to the MobA family. As to quaternary structure, monomer. Mg(2+) serves as cofactor.

It is found in the cytoplasm. The catalysed reaction is Mo-molybdopterin + GTP + H(+) = Mo-molybdopterin guanine dinucleotide + diphosphate. In terms of biological role, transfers a GMP moiety from GTP to Mo-molybdopterin (Mo-MPT) cofactor (Moco or molybdenum cofactor) to form Mo-molybdopterin guanine dinucleotide (Mo-MGD) cofactor. This chain is Molybdenum cofactor guanylyltransferase, found in Burkholderia orbicola (strain MC0-3).